The primary structure comprises 702 residues: Sodium/hydrogen exchanger 6 (702 aa).

The next 12 helical transmembrane spans lie at 72 to 92 (SANL…IWLF), 104 to 124 (GLAM…IHVP), 177 to 197 (VTFD…FYAG), 212 to 232 (ILAY…SIMY), 253 to 273 (CLLF…AIFH), 279 to 299 (VELY…AIVL), 325 to 345 (IGIF…TGVV), 373 to 393 (TFLL…FCGI), 415 to 435 (FELL…LTLF), 437 to 457 (FQNH…IFLG), 480 to 500 (NFQH…ALAI), and 516 to 536 (LLIV…MLSC).

The protein belongs to the monovalent cation:proton antiporter 1 (CPA1) transporter (TC 2.A.36) family. In terms of assembly, homodimer. Interacts with RACK1; regulates the distribution of SLC9A6 between endosomes and the plasma membrane. In terms of processing, ubiquitinated (in vitro). Glycosylated.

The protein localises to the endosome membrane. Its subcellular location is the recycling endosome membrane. It is found in the early endosome membrane. It localises to the late endosome membrane. The protein resides in the cell membrane. The enzyme catalyses Na(+)(in) + H(+)(out) = Na(+)(out) + H(+)(in). It catalyses the reaction K(+)(in) + H(+)(out) = K(+)(out) + H(+)(in). Functionally, endosomal Na(+), K(+)/H(+) antiporter. Mediates the electroneutral exchange of endosomal luminal H(+) for a cytosolic Na(+) or K(+). By facilitating proton efflux, SLC9A6 counteracts the acidity generated by vacuolar (V)-ATPase, thereby limiting luminal acidification. Responsible for alkalizing and maintaining the endosomal pH, and consequently in, e.g., endosome maturation and trafficking of recycling endosomal cargo. Plays a critical role during neurodevelopment by regulating synaptic development and plasticity. Implicated in the maintenance of cell polarity in a manner that is dependent on its ability to modulate intravesicular pH. Regulates intracelular pH in some specialized cells, osteoclasts and stereocilia where this transporter localizes to the plasma membrane. The sequence is that of Sodium/hydrogen exchanger 6 (Slc9a6) from Mus musculus (Mouse).